The following is a 485-amino-acid chain: Ribulose bisphosphate carboxylase large chain (485 aa).

Residues 1–2 (MS) constitute a propeptide that is removed on maturation. An N-acetylproline modification is found at P3. K14 bears the N6,N6,N6-trimethyllysine mark. Residues N123 and T173 each coordinate substrate. K175 serves as the catalytic Proton acceptor. K177 provides a ligand contact to substrate. 3 residues coordinate Mg(2+): K201, D203, and E204. The residue at position 201 (K201) is an N6-carboxylysine. H294 (proton acceptor) is an active-site residue. The substrate site is built by R295, H327, and S379.

The protein belongs to the RuBisCO large chain family. Type I subfamily. Heterohexadecamer of 8 large chains and 8 small chains; disulfide-linked. The disulfide link is formed within the large subunit homodimers. It depends on Mg(2+) as a cofactor. The disulfide bond which can form in the large chain dimeric partners within the hexadecamer appears to be associated with oxidative stress and protein turnover.

The protein resides in the plastid. Its subcellular location is the chloroplast. It carries out the reaction 2 (2R)-3-phosphoglycerate + 2 H(+) = D-ribulose 1,5-bisphosphate + CO2 + H2O. The catalysed reaction is D-ribulose 1,5-bisphosphate + O2 = 2-phosphoglycolate + (2R)-3-phosphoglycerate + 2 H(+). Its function is as follows. RuBisCO catalyzes two reactions: the carboxylation of D-ribulose 1,5-bisphosphate, the primary event in carbon dioxide fixation, as well as the oxidative fragmentation of the pentose substrate in the photorespiration process. Both reactions occur simultaneously and in competition at the same active site. This is Ribulose bisphosphate carboxylase large chain from Flaveria bidentis (Coastal plain yellowtops).